Here is a 341-residue protein sequence, read N- to C-terminus: Putative ankyrin repeat protein FPV031 (341 aa).

ANK repeat units lie at residues 23–55, 58–87, 92–124, 125–158, and 163–195; these read DRNS…FQET, DNLT…IINQ, CGNT…ITNN, DGFT…IRDN, and TGLT…YSTC.

The sequence is that of Putative ankyrin repeat protein FPV031 (ANK3) from Fowlpox virus (strain NVSL) (FPV).